Here is a 442-residue protein sequence, read N- to C-terminus: DNA N(6)-methyladenine demethylase ALKBH1D (442 aa).

Positions 135–144 are enriched in polar residues; the sequence is SMVHFDSTNP. Residues 135 to 185 are disordered; the sequence is SMVHFDSTNPSSSSKSSQSQNLKIRKVRNHRNSGFKSRDQSPQRIKDPPPF. The segment covering 145–154 has biased composition (low complexity); that stretch reads SSSSKSSQSQ. Positions 157 to 167 are enriched in basic residues; sequence KIRKVRNHRNS. Positions 170 to 183 are enriched in basic and acidic residues; the sequence is KSRDQSPQRIKDPP. The Fe2OG dioxygenase domain maps to 332–442; sequence SPDICIVNFY…GRLNLTFRHF (111 aa). Residue 339–341 participates in 2-oxoglutarate binding; sequence NFY. Residues histidine 350, aspartate 352, and histidine 410 each contribute to the Fe cation site. A 2-oxoglutarate-binding site is contributed by 434 to 440; that stretch reads RLNLTFR.

The protein belongs to the alkB family. Requires Fe(2+) as cofactor. In terms of tissue distribution, expressed at low levels in roots, seedlings and rosette leaves, but barely in cauline leaves, stems, siliques and flowers.

It localises to the nucleus. Its subcellular location is the cytoplasm. It carries out the reaction an N(6)-methyl-2'-deoxyadenosine in DNA + 2-oxoglutarate + O2 = a 2'-deoxyadenosine in DNA + formaldehyde + succinate + CO2. Its function is as follows. Dioxygenase that catalyzes DNA N(6)-methyladenine (6 mA) demethylation to modulate gene expression and regulate seed germination. The protein is DNA N(6)-methyladenine demethylase ALKBH1D of Arabidopsis thaliana (Mouse-ear cress).